Consider the following 326-residue polypeptide: Zinc transporter 11 (326 aa).

Residues 1-20 (MSRSLVFFFLFLVLVVPCLS) form the signal peptide. At 21–49 (HGTGGDHDDDEASHVKSSDLKSKSLISVK) the chain is on the extracellular side. A helical membrane pass occupies residues 50 to 70 (IACLVIIFVLTFISGVSPYFL). The Cytoplasmic segment spans residues 71–75 (KWSQG). A helical membrane pass occupies residues 76–96 (FLVLGTQFAGGVFLATALMHF). Over 97–121 (LSDADETFRGLLTAEGESEPSPAYP) the chain is Extracellular. The helical transmembrane segment at 122-142 (FAYMLACAGFMLTMLADSVIA) threads the bilayer. Residues 143-174 (HIYSKTQNDLELQGEDKSNQRSATTETSIGDS) lie on the Cytoplasmic side of the membrane. The chain crosses the membrane as a helical span at residues 175 to 195 (ILLIVALCFHSVFEGIAIGIS). Topologically, residues 196–203 (ETKSDAWR) are extracellular. Residues 204-224 (ALWTITLHKIFAAIAMGIALL) traverse the membrane as a helical segment. At 225–235 (RMIPDRPLFSS) the chain is on the cytoplasmic side. Residues 236–256 (ITYSFAFAISSPIGVAIGIVI) form a helical membrane-spanning segment. Over 257–262 (DATTQG) the chain is Extracellular. The chain crosses the membrane as a helical span at residues 263–283 (SIADWIFALSMSLACGVFVYV). At 284–305 (SVNHLLAKGYRPNKKVHVDEPR) the chain is on the cytoplasmic side. The helical transmembrane segment at 306–326 (YKFLAVLFGVVVIAIVMIWDT) threads the bilayer.

This sequence belongs to the ZIP transporter (TC 2.A.5) family.

The protein resides in the cell membrane. In terms of biological role, probably mediates zinc uptake from the rhizosphere. The polypeptide is Zinc transporter 11 (ZIP11) (Arabidopsis thaliana (Mouse-ear cress)).